A 721-amino-acid polypeptide reads, in one-letter code: Solute carrier family 12 member 8 (721 aa).

Helical transmembrane passes span 53–73 (FGTWDGVFTSCMINIFGVVLF), 84–104 (GVLLGIVLVSFVILVALVTVL), 115–135 (IGSGGVYSMVSTVLGGKVGGT), 136–156 (IGVLYIFGQCVAGAMYITGFA), 174–194 (ISLAVLVGLLGINLAGVKWII), 196–216 (LQLLLFLLLAVSTLDFVIGSF), 247–267 (FFTVFGVFFPAATGVMVGFNM), 283–303 (LAAIGTSWFLYVVFVFLLGAI), 321–341 (LVGGLFLLGLYISSLASCMGG), 374–394 (PVAAIFITGLLTMAFVFIGQV), and 397–417 (LAPIVTINFMLTYSAVDYSYF). Disordered regions lie at residues 473–505 (PNHTEAPESTSSQEKDPKMFKFSKPRKPAKQTL) and 533–580 (NESQ…STVA). The segment covering 553 to 565 (TESDEPDSEEDVD) has biased composition (acidic residues). 2 helical membrane-spanning segments follow: residues 606–626 (FLGAILSIVIMFVIQWIYALV) and 628–648 (LGVAIILYLYIGRVNPGLNPG).

It belongs to the SLC12A transporter family.

The protein resides in the membrane. Cation/chloride cotransporter. This chain is Solute carrier family 12 member 8 (slc12a8), found in Xenopus laevis (African clawed frog).